We begin with the raw amino-acid sequence, 345 residues long: Prenyltransferase ltmC (345 aa).

Position 112 (H112) interacts with substrate. Positions 119 and 123 each coordinate Mg(2+). Residue R128 coordinates substrate. N130 carries N-linked (GlcNAc...) asparagine glycosylation. K212, T213, Q243, N250, and K260 together coordinate substrate.

This sequence belongs to the FPP/GGPP synthase family. Mg(2+) is required as a cofactor.

The protein operates within secondary metabolite biosynthesis. Its function is as follows. Prenyltransferase; part of the gene cluster that mediates the biosynthesis of lolitrems, indole-diterpene mycotoxins that are potent tremorgens in mammals, and are synthesized by clavicipitaceous fungal endophytes in association with their grass hosts. The geranylgeranyl diphosphate (GGPP) synthase ltmG is proposed to catalyze the first step in lolitrem biosynthesis. LtmG catalyzes a series of iterative condensations of isopentenyl diphosphate (IPP) with dimethylallyl diphosphate (DMAPP), geranyl diphosphate (GPP), and farnesyl diphosphate (FPP), to form GGPP. GGPP then condenses with indole-3-glycerol phosphate to form 3-geranylgeranylindole, an acyclic intermediate, to be incorporated into paxilline. Either ltmG or ltmC could be responsible for this step, as both are putative prenyl transferases. The FAD-dependent monooxygenase ltmM then catalyzes the epoxidation of the two terminal alkenes of the geranylgeranyl moiety, which is subsequently cyclized by ltmB, to paspaline. The cytochrome P450 monooxygenases ltmQ and ltmP can sequentially oxidize paspaline to terpendole E and terpendole F. Alternatively, ltmP converts paspaline to an intermediate which is oxidized by ltmQ to terpendole F. LtmF, ltmK, ltmE and ltmJ appear to be unique to the epichloe endophytes. The prenyltransferase ltmF is involved in the 27-hydroxyl-O-prenylation. The cytochrome P450 monooxygenase ltmK is required for the oxidative acetal ring formation. The multi-functional prenyltransferase ltmE is required for C20- and C21-prenylations of the indole ring of paspalanes and acts together with the cytochrome P450 monooxygenase ltmJ to yield lolitremanes by multiple oxidations and ring closures. The stereoisomer pairs of lolitriol and lolitrem N or lolitrem B and lolitrem F may be attributed to variations in the way in which ring closure can occur under the action of ltmJ. While the major product of this pathway is lolitrem B, the prenyl transferases and cytochrome P450 monooxygenases identified in this pathway have a remarkable versatility in their regio- and stereo-specificities to generate a diverse range of metabolites that are products of a metabolic grid rather than a linear pathway. In Epichloe festucae var. lolii (Neotyphodium lolii), this protein is Prenyltransferase ltmC.